We begin with the raw amino-acid sequence, 117 residues long: Calcitonin receptor-stimulating peptide 2 (117 aa).

Positions 1 to 25 (MGFWKFPPFLVLSILVLYQAGMFHT) are cleaved as a signal peptide. A propeptide spanning residues 26 to 79 (APVRLPLESSFDSATLTEEEVSLLLVAMVKDYVQMKATVLEQESEDFSITAQEK) is cleaved from the precursor. Cys-81 and Cys-86 form a disulfide bridge.

This sequence belongs to the calcitonin family. In terms of tissue distribution, mainly expressed in the thyroid gland and CNS. Found in the nerve cells of the cerebrum, hippocampus, hypothalamus, pons/midbrain and thalamus. Also detected in the glia-like cells of pons/midbrain and in meninx of tactus opticus.

The protein resides in the secreted. The chain is Calcitonin receptor-stimulating peptide 2 (CRSP2) from Sus scrofa (Pig).